Reading from the N-terminus, the 82-residue chain is Modifier of protein aggregation 4 (82 aa).

Basic and acidic residues predominate over residues 1-23 (MTRGNQRDLAREKNQKKLADQKK). 2 disordered regions span residues 1–41 (MTRG…MDAR) and 63–82 (EAAA…PLKM).

It belongs to the SERF family.

The protein localises to the cytoplasm. The protein resides in the cytosol. It is found in the nucleus. Positive regulator of protein aggregation and age-related proteotoxicity. Induces conformational changes in aggregation-prone proteins, driving them into compact formations preceding the formation of aggregates. The chain is Modifier of protein aggregation 4 from Caenorhabditis elegans.